The following is a 397-amino-acid chain: Tryptophan synthase beta chain (397 aa).

Residue Lys-87 is modified to N6-(pyridoxal phosphate)lysine.

It belongs to the TrpB family. In terms of assembly, tetramer of two alpha and two beta chains. It depends on pyridoxal 5'-phosphate as a cofactor.

It carries out the reaction (1S,2R)-1-C-(indol-3-yl)glycerol 3-phosphate + L-serine = D-glyceraldehyde 3-phosphate + L-tryptophan + H2O. It functions in the pathway amino-acid biosynthesis; L-tryptophan biosynthesis; L-tryptophan from chorismate: step 5/5. Functionally, the beta subunit is responsible for the synthesis of L-tryptophan from indole and L-serine. In Escherichia coli O157:H7, this protein is Tryptophan synthase beta chain.